The chain runs to 78 residues: Large ribosomal subunit protein bL28 (78 aa).

This sequence belongs to the bacterial ribosomal protein bL28 family.

This is Large ribosomal subunit protein bL28 from Synechococcus sp. (strain JA-2-3B'a(2-13)) (Cyanobacteria bacterium Yellowstone B-Prime).